The following is a 504-amino-acid chain: 2-methylcitrate dehydratase 2 (504 aa).

It belongs to the PrpD family. As to quaternary structure, monomer.

The catalysed reaction is (2S,3S)-2-methylcitrate = 2-methyl-cis-aconitate + H2O. The enzyme catalyses citrate = D-threo-isocitrate. Its pathway is organic acid metabolism; propanoate degradation. It functions in the pathway carbohydrate metabolism; tricarboxylic acid cycle; isocitrate from oxaloacetate: step 1/2. Involved in the catabolism of short chain fatty acids (SCFA) via the 2-methylcitrate cycle I (propionate degradation route). Catalyzes the dehydration of 2-methylcitrate (2-MC) to yield the cis isomer 2-methyl-aconitate. Could also catalyze the dehydration of citrate and the hydration of cis-aconitate. This chain is 2-methylcitrate dehydratase 2 (prpD2), found in Corynebacterium glutamicum (strain ATCC 13032 / DSM 20300 / JCM 1318 / BCRC 11384 / CCUG 27702 / LMG 3730 / NBRC 12168 / NCIMB 10025 / NRRL B-2784 / 534).